The following is a 674-amino-acid chain: DNA mismatch repair protein MutL (674 aa).

Belongs to the DNA mismatch repair MutL/HexB family.

This protein is involved in the repair of mismatches in DNA. It is required for dam-dependent methyl-directed DNA mismatch repair. May act as a 'molecular matchmaker', a protein that promotes the formation of a stable complex between two or more DNA-binding proteins in an ATP-dependent manner without itself being part of a final effector complex. The polypeptide is DNA mismatch repair protein MutL (Clostridium perfringens (strain 13 / Type A)).